Here is a 491-residue protein sequence, read N- to C-terminus: Eupatolide synthase (491 aa).

A helical; Signal-anchor for type II membrane protein membrane pass occupies residues 7 to 27 (LPSWLLPAVVILTISCILMLW). Position 430 (cysteine 430) interacts with heme.

It belongs to the cytochrome P450 family. Requires heme as cofactor. Expressed in leaf primordia.

Its subcellular location is the membrane. It catalyses the reaction 8beta-hydroxygermacra-1(10),4,11(13)-trien-12-oate + reduced [NADPH--hemoprotein reductase] + O2 = eupatolide + oxidized [NADPH--hemoprotein reductase] + 2 H2O. It functions in the pathway secondary metabolite biosynthesis; terpenoid biosynthesis. In terms of biological role, involved in the biosynthesis of germacrene-derived sesquiterpene lactones. Hydroxylates 8-beta-hydroxy-germacrene A acid to 6-alpha,8-beta-hydroxy-germacrene A acid, which, in turn, undergo spontaneous lactonization to become eupatolide. This is Eupatolide synthase from Helianthus annuus (Common sunflower).